The primary structure comprises 503 residues: 3-octaprenyl-4-hydroxybenzoate carboxy-lyase (503 aa).

Asn176 contributes to the Mn(2+) binding site. Residues 179–181, 193–195, and 198–199 each bind prenylated FMN; these read IYR, RWL, and RG. A Mn(2+)-binding site is contributed by Glu242. Asp303 functions as the Proton donor in the catalytic mechanism.

It belongs to the UbiD family. In terms of assembly, homohexamer. Requires prenylated FMN as cofactor. It depends on Mn(2+) as a cofactor.

It is found in the cell membrane. The catalysed reaction is a 4-hydroxy-3-(all-trans-polyprenyl)benzoate + H(+) = a 2-(all-trans-polyprenyl)phenol + CO2. It functions in the pathway cofactor biosynthesis; ubiquinone biosynthesis. Catalyzes the decarboxylation of 3-octaprenyl-4-hydroxy benzoate to 2-octaprenylphenol, an intermediate step in ubiquinone biosynthesis. This is 3-octaprenyl-4-hydroxybenzoate carboxy-lyase from Ralstonia nicotianae (strain ATCC BAA-1114 / GMI1000) (Ralstonia solanacearum).